We begin with the raw amino-acid sequence, 794 residues long: Elongator complex protein 2 (794 aa).

WD repeat units lie at residues 55–93 (EHTKRVNTVRWLDCDKLLSGGDDAIAILWELDETGTTKS), 98–140 (GHTS…YVCF), 147–188 (DGFC…AGEG), 203–244 (GHED…KEQM), 286–328 (GHEG…IWLE), 337–376 (GNSVGFYGGKFSGDGHSIMAHSYQGGFHIWSQDPDRPQLW), 384–423 (GHYGEVRDLAWEHSGAYLMTASADQTTRLHAPWLQDGANP), 433–472 (IHGYDMQALALLSRYKFASGAEEKIVRTFQAPANFIENFR), 557–601 (GHGY…QIQK), 604–643 (GHQLTVTQLSFSPDSRYLLSVSRDRRWCLYERQDSSVSYQ), 654–693 (VHTRIIWSCDWSHDGQFFVTSSRDGKVVVWKKEEDCKESS), 705–751 (LKNE…WKLL), and 759–794 (AHHLTVRRLQFRPGKQLQLASCGEDHLVRIYDIKLT).

It belongs to the WD repeat ELP2 family. As to quaternary structure, component of the elongator complex composed of Elp1, Elp2, Elp3, Elp4, Elp5 and Elp6. The elongator complex associates with and stabilizes microtubules; efficient interaction requires the full complex.

It localises to the cytoplasm. The protein localises to the nucleus. Its subcellular location is the cytoskeleton. The protein resides in the spindle. The protein operates within tRNA modification; 5-methoxycarbonylmethyl-2-thiouridine-tRNA biosynthesis. Its function is as follows. Component of the elongator complex, which is required for multiple tRNA modifications, including mcm5U (5-methoxycarbonylmethyl uridine), mcm5s2U (5-methoxycarbonylmethyl-2-thiouridine), and ncm5U (5-carbamoylmethyl uridine). The elongator complex catalyzes the formation of carboxymethyluridine in the wobble base at position 34 in tRNAs. Binding by the elongator complex stabilizes microtubules and promotes their growth. This induces central spindle asymmetry, promoting polarized signaling endosome trafficking during asymmetric cell division and cell fate assignation of sensory organ precursor cells. Involved in the regulation of the STAT pathway. This Drosophila melanogaster (Fruit fly) protein is Elongator complex protein 2.